We begin with the raw amino-acid sequence, 466 residues long: Replication termination factor 1 (466 aa).

2 DNA-binding domain regions span residues Arg94–Lys249 and Tyr250–Leu421. HTH myb-type domains are found at residues Asn251–Glu304 and Ile305–Ile363. DNA-binding regions (H-T-H motif) lie at residues Trp278–Ile300 and Trp336–Ile359.

It localises to the nucleus. In terms of biological role, mediates site-specific replication termination at the polar replication barrier RTS1, a barrier which ensures that replication of the mat1 locus in S.pombe occurs in the centromere-proximal direction. This is Replication termination factor 1 (rtf1) from Schizosaccharomyces pombe (strain 972 / ATCC 24843) (Fission yeast).